Consider the following 248-residue polypeptide: Putative insertion sequence ATP-binding protein y4uH (248 aa).

106–113 contacts ATP; that stretch reads GPTGIGKS.

Belongs to the IS21/IS1162 putative ATP-binding protein family.

This Sinorhizobium fredii (strain NBRC 101917 / NGR234) protein is Putative insertion sequence ATP-binding protein y4uH.